Here is a 611-residue protein sequence, read N- to C-terminus: Threonine--tRNA ligase (611 aa).

Residues Met-1–Leu-25 form a disordered region. The segment covering Val-9–Val-24 has biased composition (low complexity). Residues Asp-209–Pro-502 form a catalytic region. Cys-302, His-353, and His-479 together coordinate Zn(2+).

Belongs to the class-II aminoacyl-tRNA synthetase family. Homodimer. The cofactor is Zn(2+).

The protein localises to the cytoplasm. It carries out the reaction tRNA(Thr) + L-threonine + ATP = L-threonyl-tRNA(Thr) + AMP + diphosphate + H(+). Catalyzes the attachment of threonine to tRNA(Thr) in a two-step reaction: L-threonine is first activated by ATP to form Thr-AMP and then transferred to the acceptor end of tRNA(Thr). Also edits incorrectly charged L-seryl-tRNA(Thr). This chain is Threonine--tRNA ligase, found in Parasynechococcus marenigrum (strain WH8102).